Reading from the N-terminus, the 1121-residue chain is MNNNSKRKTRPSGGGGGGGASGGISRYNANDNSLRPANNKSGAAGNSAGAGAGTGGTAIRPVAQGVYNNTFFMHSATALVGSVVEVVLRSGNIYEGVFRTFSGNFDIALELPACIKSKNLPEEGKVPKHIIFPADTVVKIVAKDFDSQYATAGAFKTDEAISDKCNGARLDEKELEPWDSGANGDIDIELDGAANGWDANEMFRKNENTFGVTSTFDDSLATYTIPLDKGDSLEFKEAEAKAEKLAAEIENNPTCRDRLDLENGDEEALFAAVERPEQDHRRDGDRERERNDRDREREERDRDRDRDRGNKPPRGAGDFQLRETMSSDRYITKQTRGPQMSHVSMSSQGGGGGGRDRDNGLMMPGVISGGGAGQGGATQSAAVLLLAGGLKASGPASSANAAGMDASGKYSMVKRKTVTQGGKVMRGNVPPNSSGGGNISAVQGGNGNPVGQSKGGYQPTMVMQNQYAYQGNSQIMHGSSQYRNPSHMSGGPSKLNGDANANTNKPLPQRQIRQYQGSQSNSLNYGGEPQPQMGKPMHSSHGGHPGQNSNSPPLQTGGQPQQQQQQQQQQQQQQAPQQQQHQNMAPQGQQPQPQRQMRSRDNQLQDLRQFGQDFQLAPTNNSPPQQQPQQPQQQQQQQQVQVQVQAQVQQQQQRALLQSASPPQQQSQQQQQQQQQQHVPMQHQGPPPHLHQAALSQPHYVPQPQQQQPQPQQQPPPPQQQQQQQHVPLHLQQKAQQPPQQQQQLVETQHQLVPKQHQQPPAQQQQPQLAPEPSQQPLPLYHPMPPPQTSPVVITSPVLLEAPPPQILTAQQPPQQQQLAATPKPDASPAPGSNTTTPTGIVSTPTTAAASSAGSEKSTPAAASSGATSGTAAAAVGATGATGSTGSTPVVKKHVLNPSAKPFTPRAGAGTPNPSRPHTPQTPVPMPGIYTTTGTHVPAAATNQPIYVVQQQHPFPPPTHPQAGQPPRLRRNNYAPMGASQMHVSATTATGQPLMAAGPMTQFIQYPHAPQQHFQSQGYAPMPMRLYPDQQPQLQFLTQTPQSTTPSPGQPHQPFHPPPQPSPAGGGPQPAYTPPTQQTYQLMCLHSQHVLPNPYFQPQPTPHHAPQNPQYQIVMQQHHAQ.

Residues 1 to 10 (MNNNSKRKTR) are compositionally biased toward basic residues. The segment at 1-53 (MNNNSKRKTRPSGGGGGGGASGGISRYNANDNSLRPANNKSGAAGNSAGAGAG) is disordered. Positions 12–22 (SGGGGGGGASG) are enriched in gly residues. The segment covering 27 to 36 (YNANDNSLRP) has biased composition (polar residues). Low complexity predominate over residues 37–47 (ANNKSGAAGNS). One can recognise a Sm domain in the interval 71–146 (FFMHSATALV…VVKIVAKDFD (76 aa)). A phosphoserine mark is found at serine 219 and serine 232. Disordered stretches follow at residues 270-376 (FAAV…GQGG), 422-458 (GKVM…GGYQ), 476-935 (MHGS…TTGT), and 1039-1076 (QTPQ…TPPT). Over residues 274-310 (ERPEQDHRRDGDRERERNDRDREREERDRDRDRDRGN) the composition is skewed to basic and acidic residues. The span at 323–347 (ETMSSDRYITKQTRGPQMSHVSMSS) shows a compositional bias: polar residues. Gly residues-rich tracts occupy residues 367–376 (ISGGGAGQGG) and 434–448 (SGGG…GNGN). 2 stretches are compositionally biased toward polar residues: residues 476–487 (MHGSSQYRNPSH) and 499–524 (ANAN…NSLN). Low complexity-rich tracts occupy residues 552–596 (PPLQ…PQRQ), 623–684 (PPQQ…MQHQ), 697–711 (QPHY…QPQP), and 720–773 (QQQQ…APEP). Over residues 774–789 (SQQPLPLYHPMPPPQT) the composition is skewed to pro residues. 2 stretches are compositionally biased toward low complexity: residues 807–825 (ILTA…TPKP) and 835–890 (TTTP…STPV). 2 stretches are compositionally biased toward pro residues: residues 914–926 (PSRP…PVPM) and 1048–1062 (PGQP…PQPS).

Belongs to the ataxin-2 family.

It is found in the cytoplasm. Functionally, regulator of actin filament formation, though it does not directly assemble with actin filaments. Required for oocyte specification and oocyte positioning in the female germline. Also required for normal eye development and bristle morphology. This Drosophila pseudoobscura pseudoobscura (Fruit fly) protein is Ataxin-2 homolog.